We begin with the raw amino-acid sequence, 906 residues long: Peroxisomal hydratase-dehydrogenase-epimerase (906 aa).

Short-chain dehydrogenase like stretches follow at residues 5 to 228 and 319 to 532; these read DFKD…SSAE and SLKD…GTDD. Residues Ile-13, Lys-52, Asn-98, and Lys-131 each coordinate NADP(+). Catalysis depends on proton donor residues Ser-149 and Tyr-163. NADP(+) contacts are provided by Tyr-163 and Lys-167. The Proton acceptor role is filled by Tyr-163. Lys-167 serves as the catalytic Lowers pKa of active site Tyr. Tyr-467 functions as the Proton acceptor in the catalytic mechanism. The segment at 600-633 is disordered; it reads AVGGDDDDDDEDEEEDEGDEEEDEEDEEEDDPVW. Residues 603 to 630 show a composition bias toward acidic residues; that stretch reads GDDDDDDEDEEEDEGDEEEDEEDEEEDD. Residues His-699, Gly-700, Lys-729, Tyr-757, Asp-808, Asn-810, Gly-831, Phe-856, Thr-857, and Gly-858 each coordinate (3R)-3-hydroxydecanoyl-CoA. In terms of domain architecture, MaoC-like spans 782–893; that stretch reads APKRAPDYQV…VVDRGTIAIN (112 aa). Positions 904-906 match the Microbody targeting signal motif; the sequence is AKI.

Belongs to the short-chain dehydrogenases/reductases (SDR) family. In terms of assembly, monomer.

The protein resides in the peroxisome. It carries out the reaction a (3R)-3-hydroxyacyl-CoA = a (2E)-enoyl-CoA + H2O. It catalyses the reaction a (3R)-3-hydroxyacyl-CoA + NAD(+) = a 3-oxoacyl-CoA + NADH + H(+). The protein operates within lipid metabolism; fatty acid beta-oxidation. In terms of biological role, second trifunctional enzyme acting on the beta-oxidation pathway for fatty acids, possessing hydratase-dehydrogenase-epimerase activities. Converts trans-2-enoyl-CoA via D-3-hydroxyacyl-CoA to 3-ketoacyl-CoA. The polypeptide is Peroxisomal hydratase-dehydrogenase-epimerase (Candida tropicalis (Yeast)).